The primary structure comprises 382 residues: Homoserine O-acetyltransferase (382 aa).

Positions 1–20 (MSTDQSPCPSATGAELLPPP) are disordered. The AB hydrolase-1 domain maps to 59–363 (NVVLVEHALT…RDGHDGFLTE (305 aa)). Serine 164 (nucleophile) is an active-site residue. Residue arginine 234 participates in substrate binding. Active-site residues include aspartate 327 and histidine 357. Aspartate 358 is a binding site for substrate.

The protein belongs to the AB hydrolase superfamily. MetX family. In terms of assembly, homodimer.

The protein localises to the cytoplasm. It carries out the reaction L-homoserine + acetyl-CoA = O-acetyl-L-homoserine + CoA. It functions in the pathway amino-acid biosynthesis; L-methionine biosynthesis via de novo pathway; O-acetyl-L-homoserine from L-homoserine: step 1/1. Functionally, transfers an acetyl group from acetyl-CoA to L-homoserine, forming acetyl-L-homoserine. In Nocardia farcinica (strain IFM 10152), this protein is Homoserine O-acetyltransferase.